Here is a 720-residue protein sequence, read N- to C-terminus: IKIMVERDPIKTSFEKWANPGHFSRTLAKGDPETTTWIWNLHADAHDFDSHTEDLEEISRKIFSAHFGQLAIIFIWLSGMYFHGARFSNYEAWLADPTHIKPSAQVVWPIVGQEILNGDVGGGFRGIQITSGFFPIWRASGITSELQLYCTAIGGLIFAALMLFAGWFHYHKAAPKLSWFQVESMLNHHLAGLLGLGSLSWAGHQVHVSLPINQLLDAGVDPKEIPLPHEFILNRDLLIQLYPSFSKGLTPFFTLNWSEYSEILTFRGGLNPITGGLWLTDIVHHHLAIAVIFLIAGHMYKTNWGIGHSIQEILEAHKGPFTGEGHKGLYEILTTSWHAQLALNLAILGSLTIVVAHHMYSMPPYPYLAIDYGTQLSLFTHHMWIGGFVIIGAAAHAAIFLVRDYDSTTSYNNLFDRVLRHRDAIISHLNWTCIFLGFHSFGLYIHNDTMSALGRPQDMFSDTAIQLQPIFAQWLQNTHVTAPRFTAPAATASTSFTWGGNDLVTVGTKVALLPIPLGTADFLVHHIHAFTIHVTVLILLKGVLFARSSRLIPDKANLGFRFPCDGPGRGGTCQVSAWDHVFLGLFWMYNAISVVIFHFSWKMQSDVWGNISTQGVVTHITGGNFAQSSVTINGWLRDFLWAQASQVIQSYGSALSAYGLFFLGAHFVWAFSLMFLFSGRGYWQELIESIVWAHNKLKVAPAIQPRALSIVQGRAVGVAH.

8 helical membrane passes run 62–85 (IFSA…FHGA), 148–171 (LYCT…FHYH), 186–210 (LNHH…HVSL), 282–300 (IVHH…GHMY), 337–360 (WHAQ…HHMY), 376–402 (LSLF…IFLV), 424–446 (AIIS…LYIH), and 522–540 (FLVH…LILL). Cysteine 564 and cysteine 573 together coordinate [4Fe-4S] cluster. A run of 2 helical transmembrane segments spans residues 580-601 (HVFL…HFSW) and 655-677 (LSAY…MFLF). Histidine 666 serves as a coordination point for chlorophyll a'. Chlorophyll a-binding residues include methionine 674 and tyrosine 682. Tryptophan 683 contacts phylloquinone. Residues 715–720 (AVGVAH) traverse the membrane as a helical segment.

It belongs to the PsaA/PsaB family. In terms of assembly, the PsaA/B heterodimer binds the P700 chlorophyll special pair and subsequent electron acceptors. PSI consists of a core antenna complex that captures photons, and an electron transfer chain that converts photonic excitation into a charge separation. The eukaryotic PSI reaction center is composed of at least 11 subunits. P700 is a chlorophyll a/chlorophyll a' dimer, A0 is one or more chlorophyll a, A1 is one or both phylloquinones and FX is a shared 4Fe-4S iron-sulfur center. serves as cofactor.

The protein resides in the plastid. It is found in the chloroplast thylakoid membrane. It carries out the reaction reduced [plastocyanin] + hnu + oxidized [2Fe-2S]-[ferredoxin] = oxidized [plastocyanin] + reduced [2Fe-2S]-[ferredoxin]. In terms of biological role, psaA and PsaB bind P700, the primary electron donor of photosystem I (PSI), as well as the electron acceptors A0, A1 and FX. PSI is a plastocyanin-ferredoxin oxidoreductase, converting photonic excitation into a charge separation, which transfers an electron from the donor P700 chlorophyll pair to the spectroscopically characterized acceptors A0, A1, FX, FA and FB in turn. Oxidized P700 is reduced on the lumenal side of the thylakoid membrane by plastocyanin. The sequence is that of Photosystem I P700 chlorophyll a apoprotein A1 from Ephedra tweediana (Vining horsetail).